The following is a 330-amino-acid chain: Methionyl-tRNA formyltransferase (330 aa).

Residue 116–119 (SLLP) coordinates (6S)-5,6,7,8-tetrahydrofolate.

This sequence belongs to the Fmt family.

The enzyme catalyses L-methionyl-tRNA(fMet) + (6R)-10-formyltetrahydrofolate = N-formyl-L-methionyl-tRNA(fMet) + (6S)-5,6,7,8-tetrahydrofolate + H(+). Its function is as follows. Attaches a formyl group to the free amino group of methionyl-tRNA(fMet). The formyl group appears to play a dual role in the initiator identity of N-formylmethionyl-tRNA by promoting its recognition by IF2 and preventing the misappropriation of this tRNA by the elongation apparatus. In Nitratidesulfovibrio vulgaris (strain ATCC 29579 / DSM 644 / CCUG 34227 / NCIMB 8303 / VKM B-1760 / Hildenborough) (Desulfovibrio vulgaris), this protein is Methionyl-tRNA formyltransferase.